The chain runs to 644 residues: MISPVVISRLIDEKKSMENGAILPQAIAQPQLCPTKPALARRDGVSMHRRFALSPDRLGILTPSDDQGLETEPLSTGDNLGKGSHSGFSSITITARRVGPPASSLVWDTFRDPLCPKCKAKDALFQEPPVLAGDAHLCQHNRPFTCTESPSNGSVEGMKVFQAHSRLSARQDYWVTHTNDNEDSFSSDNSPSRKVPLVFSSCVHFRVSQQCPNAIYYLDKSLSVPLERPQIASPKMHRSVLSLSLRCSSHQLTADGVDSSANGEPISTALSQELSEGKQDLLGPQWGQPQGGHWKESPALVPVHLGSGTCPRTGSPPLENVKFADVGRNQVPVRKEKEDHATCTSSSHTNQLSIHIPGWSYRAETKVLSGSKKQQQEAQRTLPAFPVGQKTIKHFPPEGDSSPSSDGQPSILSESNERQHPYFMIPRVPLPGFYCPLQTGCASLQEDGAVQIETHFPKDYTCCDLVVKLKECEKNEDPTVTPEPSPATPSPSTPEGAQSSDPSEDSYEPLLASSMTLQEALEVHRPQFISRSQERLQKLKRMVQQRKTQQKESLGQKQSLLPVRANKKQFTIPHPLSDNLFKPKERCISEKEMHMRSKRIYNNLPEVKKKKEEQKKRMILQSNRLRAEVFKKQLLDQLLQRNAV.

The segment at 1–67 (MISPVVISRL…LGILTPSDDQ (67 aa)) is required for interaction with p53/TP53. Disordered regions lie at residues 62-83 (TPSDDQGLETEPLSTGDNLGKG), 305-349 (LGSG…SSHT), 367-413 (VLSG…SILS), and 475-507 (NEDPTVTPEPSPATPSPSTPEGAQSSDPSEDSY). A required for interaction with HDAC1 region spans residues 67–175 (QGLETEPLST…RLSARQDYWV (109 aa)). A compositionally biased stretch (low complexity) spans 398 to 410 (EGDSSPSSDGQPS). Positions 481 to 492 (TPEPSPATPSPS) are enriched in pro residues. Positions 516–644 (TLQEALEVHR…LDQLLQRNAV (129 aa)) are ALMS motif. Positions 598-629 (KRIYNNLPEVKKKKEEQKKRMILQSNRLRAEV) form a coiled coil.

Interacts with HDAC1; the interaction prevents binding of HDAC1 to CDKN1A/p21 and facilitates the acetylation and stabilization of CDKN1A/p21. Interacts with p53/TP53; the interaction inhibits binding of p53/TP53 and MDM2. Highly expressed in testis. Weak expression found in brain, lung, heart, ovary, thymus, spleen and kidney.

It localises to the cytoplasm. The protein resides in the cytoskeleton. It is found in the microtubule organizing center. The protein localises to the centrosome. Tumor suppressor that is required to sustain G2/M checkpoint after DNA damage. Acts as a p53/TP53 activator by inhibiting MDM2 binding to p53/TP53 and stimulating non-proteolytic polyubiquitination of p53/TP53. Exhibits ubiquitin ligase (E3) activity and assemble ubiquitin polymers through 'Lys-11'- (K11-), 'Lys-29'- (K29-) and 'Lys-63'- (K63)-linkages, independently of the ubiquitin-conjugating enzyme (E2). Promotes p53/TP53-dependent transcription of CDKN1A/p21, leading to robust checkpoint response. Mediates CDKN1A/p21 protein stability in a ubiquitin-independent manner. Interacts with HDAC1 and prevents binding of HDAC1 to CDKN1A/p21 and facilitates the acetylation and stabilization of CDKN1A/p21. May have a role in the assembly of primary cilia. The chain is (E2-independent) E3 ubiquitin-conjugating enzyme FATS from Mus musculus (Mouse).